Reading from the N-terminus, the 327-residue chain is DNA-directed RNA polymerase subunit alpha (327 aa).

Positions 1–233 (MVREKVKVST…NLFIPFLHVE (233 aa)) are alpha N-terminal domain (alpha-NTD). An alpha C-terminal domain (alpha-CTD) region spans residues 267–327 (LAFQYIFIDQ…KKILDILEKK (61 aa)).

This sequence belongs to the RNA polymerase alpha chain family. As to quaternary structure, in plastids the minimal PEP RNA polymerase catalytic core is composed of four subunits: alpha, beta, beta', and beta''. When a (nuclear-encoded) sigma factor is associated with the core the holoenzyme is formed, which can initiate transcription.

It localises to the plastid. It is found in the chloroplast. It carries out the reaction RNA(n) + a ribonucleoside 5'-triphosphate = RNA(n+1) + diphosphate. Functionally, DNA-dependent RNA polymerase catalyzes the transcription of DNA into RNA using the four ribonucleoside triphosphates as substrates. The sequence is that of DNA-directed RNA polymerase subunit alpha from Nasturtium officinale (Watercress).